Reading from the N-terminus, the 510-residue chain is NAD(P)H-quinone oxidoreductase subunit 2 B, chloroplastic (510 aa).

A run of 13 helical transmembrane segments spans residues Leu24–Leu44, Ile57–Phe77, Ile99–Ile119, Met124–Cys144, Leu149–Tyr169, Tyr183–Gly203, Pro227–Ala247, Trp295–Ile315, Met323–Asp343, Tyr354–Leu374, Ala395–Phe415, Leu418–Leu438, and Met484–Ile504.

Belongs to the complex I subunit 2 family. In terms of assembly, NDH is composed of at least 16 different subunits, 5 of which are encoded in the nucleus.

The protein localises to the plastid. It localises to the chloroplast thylakoid membrane. The catalysed reaction is a plastoquinone + NADH + (n+1) H(+)(in) = a plastoquinol + NAD(+) + n H(+)(out). It carries out the reaction a plastoquinone + NADPH + (n+1) H(+)(in) = a plastoquinol + NADP(+) + n H(+)(out). In terms of biological role, NDH shuttles electrons from NAD(P)H:plastoquinone, via FMN and iron-sulfur (Fe-S) centers, to quinones in the photosynthetic chain and possibly in a chloroplast respiratory chain. The immediate electron acceptor for the enzyme in this species is believed to be plastoquinone. Couples the redox reaction to proton translocation, and thus conserves the redox energy in a proton gradient. This chain is NAD(P)H-quinone oxidoreductase subunit 2 B, chloroplastic, found in Daucus carota (Wild carrot).